The following is a 344-amino-acid chain: Pyruvate dehydrogenase E1 component subunit alpha (344 aa).

His-55, Tyr-81, Arg-82, Ala-130, Ile-132, Asp-168, Gly-169, and Asn-197 together coordinate pyruvate. The thiamine diphosphate site is built by Tyr-81, Arg-82, Ala-130, Ile-132, Asp-168, Gly-169, Asn-197, and His-266. Asp-168 is a Mg(2+) binding site. Asn-197 contacts Mg(2+).

As to quaternary structure, heterodimer of an alpha and a beta chain. Thiamine diphosphate is required as a cofactor. Requires Mg(2+) as cofactor.

It is found in the plastid. The protein localises to the chloroplast. It carries out the reaction N(6)-[(R)-lipoyl]-L-lysyl-[protein] + pyruvate + H(+) = N(6)-[(R)-S(8)-acetyldihydrolipoyl]-L-lysyl-[protein] + CO2. Its function is as follows. The pyruvate dehydrogenase complex catalyzes the overall conversion of pyruvate to acetyl-CoA and CO(2). It contains multiple copies of three enzymatic components: pyruvate dehydrogenase (E1), dihydrolipoamide acetyltransferase (E2) and lipoamide dehydrogenase (E3). The protein is Pyruvate dehydrogenase E1 component subunit alpha (pdhA) of Porphyra purpurea (Red seaweed).